A 374-amino-acid polypeptide reads, in one-letter code: tRNA-specific 2-thiouridylase MnmA (374 aa).

Residues 17–24 and methionine 43 contribute to the ATP site; that span reads GMSGGVDS. The tract at residues 103–105 is interaction with target base in tRNA; that stretch reads NPD. Cysteine 108 functions as the Nucleophile in the catalytic mechanism. A disulfide bridge links cysteine 108 with cysteine 204. Glycine 132 is an ATP binding site. The interaction with tRNA stretch occupies residues 154-156; the sequence is KDQ. Cysteine 204 functions as the Cysteine persulfide intermediate in the catalytic mechanism. The interaction with tRNA stretch occupies residues 316-317; it reads RY.

The protein belongs to the MnmA/TRMU family.

It localises to the cytoplasm. The enzyme catalyses S-sulfanyl-L-cysteinyl-[protein] + uridine(34) in tRNA + AH2 + ATP = 2-thiouridine(34) in tRNA + L-cysteinyl-[protein] + A + AMP + diphosphate + H(+). Its function is as follows. Catalyzes the 2-thiolation of uridine at the wobble position (U34) of tRNA, leading to the formation of s(2)U34. This Pseudomonas putida (strain GB-1) protein is tRNA-specific 2-thiouridylase MnmA.